We begin with the raw amino-acid sequence, 1238 residues long: MMGVTTTLNEDTEPSIPPGFGPFATLPLWGIHNDAKPAVTHSTPVQALQSIRKDSEECQPSAAVSRSDTPCSTSGTQTCRKSLRNRPPIDYSRFEHISDEDSDVEIVEKDVSSTRRRQQLPKGVLRGCAECSDCQKVIAKWNPAGARRPVLDEAPVFYPTEEEFEDTLKYIESIRPMAEPYGICRIVPPSSWKPPCLLKDKSIWEGSKFSTRVQKVDKLQNRKSSKKGRRGGMMKRRKLAESEENSATAHTQTGMQQSPERFGFEPGPEFTLQTFQKYADDFSKQYFRKDTSMDSVPSVEDIEGEYWRIVEVPTEEIEVIYGADLETGTFGSGFPKLSPETKSDAEDKYAQSGWNLNNLPRLQGSVLSFEGGDISGVLVPWVYVGMCFSSFCWHVEDHHLYSLNYMHWGAPKLWYGVPGKDAVNLESAMRKHLPELFEEQPDLLHNLVTQFSPSLLKSEGVHVYRCVQHEGEFVLTFPRAYHAGFNCGFNCAEAVNVAPIDWLPIGHNAVELYREQARKITISHDKLLLGAAREAIRAQWDILFLKRNTADNMRWKSICGADSTIFKALKARIETELVQRKTLGVPAQSRKMDAEFDSIDRECALCYYDLHLSASGCPCCPEKYACLVHAKQLCSCDWDKRFFLFRYDVNELNILADALGGKLSAIHRWGVSDLGLSLSSCVKREKVQDSKTVRRLTDGPRRSYMSQASAVSLVSSSTSNEQKDEGNKIMKIASPQTNNVCPSVEQRKSENISPLKEPCVRNELSCTTNSDSNGLQYNGGLGGHKGSAPGLPVSSSPSFSSNVATRPISTSSVSMKIVQGLVASKSCIQASSRTGDSRSLLGEHHNRSPAMIHDGTNMKSSLESSNNSCRLIASDYNATPCHSSKDQVLVTPGTNASVVTLKDSSQVHSASSQQFVRTGPWTQSASHEASSPSTSALKPSLDPPAMKNLYGGFTQGSAHPGPPSFSNQQPNDGRLQRTSESLPGVEARARGHPTVTAQPALEIHSRNGGAQKGPRIANVVHRFKCSVEPLEIGVVLSGRLWSSSQAIFPKGFRSRVKYFSIVDPIQMAYYISEILDAGMQGPLFMVKLENCPGEVFINLSPTKCWNMVRERLNMEIRRQLNMGKSNLPTLQPPGSVDGLEMFGLLSPPIVQAIWARDRDHICTEYWRSRPHVLIEDPNNRHMLSQGPPLLALRGLIQRANRDELQVLRSLMTNSNNLDDSSRQQAAHIIEEEIAKQLC.

The disordered stretch occupies residues E56–C79. The segment covering A62 to C79 has biased composition (polar residues). Positions A154–P195 constitute a JmjN domain. Positions K215 to P266 are disordered. The segment covering N221–K238 has biased composition (basic residues). Positions N245–P259 are enriched in polar residues. A JmjC domain is found at K348–R514. The Fe cation site is built by H394, E396, and H482. 4 disordered regions span residues G699–E725, Y777–S798, T834–E863, and A910–T978. A compositionally biased stretch (low complexity) spans S706–S719. The span at A910–Q923 shows a compositional bias: polar residues. Residues S924 to A936 are compositionally biased toward low complexity. The span at S964 to T978 shows a compositional bias: polar residues. One can recognise an FYR N-terminal domain in the interval V1019–A1077. The FYR C-terminal domain maps to M1079 to R1169.

Fe(2+) is required as a cofactor. In terms of tissue distribution, expressed in roots, leaf sheaths, stems and panicles.

The protein resides in the nucleus. It carries out the reaction N(6),N(6),N(6)-trimethyl-L-lysyl(4)-[histone H3] + 3 2-oxoglutarate + 3 O2 = L-lysyl(4)-[histone H3] + 3 formaldehyde + 3 succinate + 3 CO2. Functionally, histone demethylase that demethylates 'Lys-4' (H3K4me) of histone H3 with a specific activity for H3K4me3, H3K4me2 and H3K4me1. No activity on H3K9me3/2/1, H3K27me3/2/1 and H3K36me3/2/1. Involved in the control of stem elongation by regulating methylation states of H3K4me3 on cytokinin oxidase (CKX) gene family, which may cause increased expression of CKX genes and reduced cytokinin levels. Prevents ectopic retrotransposition by regulating the levels of H3K4me3 in two non-LTR retrotransposons KARMA and LINE-1 (L1) and reinforcing their repressed states. In Oryza sativa subsp. japonica (Rice), this protein is Lysine-specific demethylase JMJ703 (JMJ703).